The sequence spans 540 residues: Sterol O-acyltransferase 1 (540 aa).

A disordered region spans residues 1 to 20 (MSLRNRLSKSGENPEQDEAQ). Over 1–128 (MSLRNRLSKS…LDELFEVDHI (128 aa)) the chain is Cytoplasmic. Residue serine 2 is modified to Phosphoserine. Histidine 127 serves as a coordination point for cholesterol. Residues 129–150 (RTIYHMFIALLILFVLSTIVVD) traverse the membrane as a helical segment. Topologically, residues 151–170 (YIDEGRLVLEFNLLAYAFGK) are lumenal. The helical transmembrane segment at 171 to 196 (FPTVIWTWWAMFLSTLSIPYFLFQRW) threads the bilayer. Residues 197–208 (AHGYSKSSHPLI) lie on the Cytoplasmic side of the membrane. The chain crosses the membrane as a helical span at residues 209–234 (YSLVHGLLFLVFQLGVLGFVPTYVVL). The Lumenal segment spans residues 235-242 (AYTLPPAS). The helical transmembrane segment at 243 to 266 (RFILILEQIRLIMKAHSFVRENIP) threads the bilayer. The Cytoplasmic portion of the chain corresponds to 267–309 (RVLNAAKEKSSKDPLPTVNQYLYFLFAPTLIYRDNYPRTPTVR). Residues 310-342 (WGYVAMQFLQVFGCLFYVYYIFERLCAPLFRNI) form a helical membrane-spanning segment. Residues 343–359 (KQEPFSARVLVLCVFNS) lie on the Lumenal side of the membrane. A helical membrane pass occupies residues 360–385 (ILPGVLILFLSFFAFLHCWLNAFAEM). At 386–433 (LRFGDRMFYKDWWNSTSYSNYYRTWNVVVHDWLYYYVYKDLLWFFSKR) the chain is on the cytoplasmic side. The FYXDWWN motif signature appears at 393-399 (FYKDWWN). Residues asparagine 405, arginine 408, asparagine 411, histidine 415, tyrosine 423, lysine 435, and serine 446 each contribute to the an acyl-CoA site. A helical membrane pass occupies residues 434–458 (FKSAAMLAVFALSAVVHEYALAICL). Histidine 450 is a catalytic residue. At 459-464 (SYFYPV) the chain is on the lumenal side. The chain crosses the membrane as a helical span at residues 465–480 (LFVLFMFFGMAFNFIV). Residues 481–486 (NDSRKR) are Cytoplasmic-facing. The helical transmembrane segment at 487–518 (PIWNIMVWASLFLGYGLILCFYSQEWYARQHC) threads the bilayer. A disulfide bridge links cysteine 518 with cysteine 536. Residues 519–540 (PLKNPTFLDYVRPRTWTCRYVF) lie on the Lumenal side of the membrane.

It belongs to the membrane-bound acyltransferase family. Sterol o-acyltransferase subfamily. In terms of assembly, may form homo- or heterodimers. Interacts with UBIAD1.

The protein localises to the endoplasmic reticulum membrane. It carries out the reaction a sterol + a long-chain fatty acyl-CoA = a long-chain 3-hydroxysterol ester + CoA. The catalysed reaction is cholesterol + an acyl-CoA = a cholesterol ester + CoA. It catalyses the reaction cholesterol + (9Z)-octadecenoyl-CoA = cholesteryl (9Z-octadecenoate) + CoA. The enzyme catalyses cholesterol + hexadecanoyl-CoA = cholesteryl hexadecanoate + CoA. It carries out the reaction octadecanoyl-CoA + cholesterol = cholesteryl octadecanoate + CoA. The catalysed reaction is (9Z,12Z)-octadecadienoyl-CoA + cholesterol = cholesteryl (9Z,12Z)-octadecadienoate + CoA. It catalyses the reaction (5Z,8Z,11Z,14Z)-eicosatetraenoyl-CoA + cholesterol = cholesteryl (5Z,8Z,11Z,14Z)-eicosatetraenoate + CoA. The enzyme catalyses (9Z)-hexadecenoyl-CoA + cholesterol = cholesteryl (9Z)-hexadecenoate + CoA. It carries out the reaction (11Z)-octadecenoyl-CoA + cholesterol = cholesteryl (11Z)-octadecenoate + CoA. The catalysed reaction is (7Z)-octadecenoyl-CoA + cholesterol = cholesteryl (7Z)-octadecenoate + CoA. Functionally, catalyzes the formation of fatty acid-cholesterol esters, which are less soluble in membranes than cholesterol. Plays a role in lipoprotein assembly and dietary cholesterol absorption. Preferentially utilizes oleoyl-CoA ((9Z)-octadecenoyl-CoA) as a substrate: shows a higher activity towards an acyl-CoA substrate with a double bond at the delta-9 position (9Z) than towards saturated acyl-CoA or an unsaturated acyl-CoA with a double bond at the delta-7 (7Z) or delta-11 (11Z) positions. The sequence is that of Sterol O-acyltransferase 1 from Mus musculus (Mouse).